An 840-amino-acid chain; its full sequence is Phosphatidylglycerol lysyltransferase (840 aa).

At 1–8 (MTEELKNR) the chain is on the cytoplasmic side. A helical transmembrane segment spans residues 9 to 29 (LLSILKFVFAAVLFIAVVATL). The Extracellular portion of the chain corresponds to 30–52 (YHELAHINFKQTLEAFSKINRWY). Residues 53–73 (LVGLFICGGSAMILLSLYDLI) form a helical membrane-spanning segment. Topologically, residues 74 to 89 (LVKGLKLDIPLIRVFK) are cytoplasmic. The chain crosses the membrane as a helical span at residues 90–110 (ISYIINALNAIVGFGGFIGAG). At 111-129 (FRAFIYKNYTTDRKKLVHA) the chain is on the extracellular side. A helical transmembrane segment spans residues 130 to 150 (ISIILISMLMGLSLLSILVVL). At 151–167 (HIFDASHIINKVSWVRW) the chain is on the cytoplasmic side. Residues 168–188 (ILYVVALFLPLFIAYTMINPI) traverse the membrane as a helical segment. Residues 189 to 193 (DRNNK) are Extracellular-facing. Residues 194–216 (YLGVYCTLVSSFEWLAAATVLYL) traverse the membrane as a helical segment. The Cytoplasmic segment spans residues 217-229 (STVIVDINIAFTT). Residues 230-250 (VIGIFIIAALSGLVSFIPGGF) form a helical membrane-spanning segment. At 251–271 (GAFDLVVLLGLKSLGVPEEKV) the chain is on the extracellular side. A helical transmembrane segment spans residues 272 to 292 (LLALLLYRFAYYFVPVIIALI). Residues 293-335 (LSTFEFGSSARKYFEESKYFVPARDVTSFLFSYQKDIIAKIPS) lie on the Cytoplasmic side of the membrane. The chain crosses the membrane as a helical span at residues 336-356 (FALATLVLITSFVFFINNITI). The Extracellular segment spans residues 357–366 (VYDGLYDDHH). A helical transmembrane segment spans residues 367–387 (FAYYIMLSVHTSACLLLLINV). Residues 388 to 394 (RGVFKQS) are Cytoplasmic-facing. 2 consecutive transmembrane segments (helical) span residues 395–415 (RRAI…TIYT) and 416–436 (YASL…ILAY). At 437-450 (RRSKVMKRPFRLKR) the chain is on the cytoplasmic side. The chain crosses the membrane as a helical span at residues 451-471 (LIFTIILSMLVLYVNHFIISE). Over 472 to 490 (TLYALDIYHIEMDTSLLKY) the chain is Extracellular. Residues 491–511 (YFWLTILVVVILVGIVAWLLG) traverse the membrane as a helical segment. Topologically, residues 512–840 (SRYTRPHQLE…LKVMRVIRHK (329 aa)) are cytoplasmic.

Belongs to the LPG synthase family.

The protein resides in the cell membrane. It carries out the reaction L-lysyl-tRNA(Lys) + a 1,2-diacyl-sn-glycero-3-phospho-(1'-sn-glycerol) = a 1,2-diacyl-sn-glycero-3-phospho-1'-(3'-O-L-lysyl)-sn-glycerol + tRNA(Lys). Its function is as follows. Catalyzes the transfer of a lysyl group from L-lysyl-tRNA(Lys) to membrane-bound phosphatidylglycerol (PG), which produces lysylphosphatidylglycerol (LPG), a major component of the bacterial membrane with a positive net charge. LPG synthesis contributes to bacterial virulence as it is involved in the resistance mechanism against cationic antimicrobial peptides (CAMP) produces by the host's immune system (defensins, cathelicidins) and by the competing microorganisms (bacteriocins). In fact, the modification of anionic phosphatidylglycerol with positively charged L-lysine results in repulsion of the peptides. The sequence is that of Phosphatidylglycerol lysyltransferase (mprF) from Staphylococcus haemolyticus (strain JCSC1435).